A 266-amino-acid chain; its full sequence is Ribonuclease 3 (266 aa).

Positions 1–35 (MMDESADIKPVPTSEDVAAPSGTEPVAPAPKKKRA) are disordered. The region spanning 43 to 171 (MAAIEQRLGH…VIGAVYLDGG (129 aa)) is the RNase III domain. E84 contributes to the Mg(2+) binding site. Residue D88 is part of the active site. Residues D157 and E160 each coordinate Mg(2+). The active site involves E160. The region spanning 196–265 (DPKTVLQEWA…ASAMIVREGV (70 aa)) is the DRBM domain.

Belongs to the ribonuclease III family. In terms of assembly, homodimer. The cofactor is Mg(2+).

Its subcellular location is the cytoplasm. The enzyme catalyses Endonucleolytic cleavage to 5'-phosphomonoester.. Its function is as follows. Digests double-stranded RNA. Involved in the processing of primary rRNA transcript to yield the immediate precursors to the large and small rRNAs (23S and 16S). Processes some mRNAs, and tRNAs when they are encoded in the rRNA operon. Processes pre-crRNA and tracrRNA of type II CRISPR loci if present in the organism. This is Ribonuclease 3 from Nitrobacter winogradskyi (strain ATCC 25391 / DSM 10237 / CIP 104748 / NCIMB 11846 / Nb-255).